The sequence spans 88 residues: Small ribosomal subunit protein eS21 (88 aa).

This sequence belongs to the eukaryotic ribosomal protein eS21 family. Component of the 40S small ribosomal subunit.

It is found in the cytoplasm. The protein resides in the cytosol. Its subcellular location is the rough endoplasmic reticulum. This chain is Small ribosomal subunit protein eS21 (rps-21), found in Caenorhabditis elegans.